Reading from the N-terminus, the 658-residue chain is Integrator complex subunit 9 (658 aa).

Residues 547–586 (KDNKHVLQPPPKPVAPPGSKKRKRPAEESPETPPFKPLLS) are disordered. The Nuclear localization signal motif lies at 566 to 570 (KKRKR).

This sequence belongs to the metallo-beta-lactamase superfamily. RNA-metabolizing metallo-beta-lactamase-like family. INTS9 subfamily. As to quaternary structure, component of the Integrator complex, composed of core subunits INTS1, INTS2, INTS3, INTS4, INTS5, INTS6, INTS7, INTS8, INTS9/RC74, INTS10, INTS11/CPSF3L, INTS12, INTS13, INTS14 and INTS15. The core complex associates with protein phosphatase 2A subunits PPP2CA and PPP2R1A, to form the Integrator-PP2A (INTAC) complex. INTS9 is part of the RNA endonuclease subcomplex, composed of INTS4, INTS9, INTS11 and inositol hexakisphosphate (InsP6).

The protein resides in the nucleus. It is found in the cytoplasm. In terms of biological role, component of the integrator complex, a multiprotein complex that terminates RNA polymerase II (Pol II) transcription in the promoter-proximal region of genes. The integrator complex provides a quality checkpoint during transcription elongation by driving premature transcription termination of transcripts that are unfavorably configured for transcriptional elongation: the complex terminates transcription by (1) catalyzing dephosphorylation of the C-terminal domain (CTD) of Pol II subunit POLR2A/RPB1 and SUPT5H/SPT5, (2) degrading the exiting nascent RNA transcript via endonuclease activity and (3) promoting the release of Pol II from bound DNA. The integrator complex is also involved in terminating the synthesis of non-coding Pol II transcripts, such as enhancer RNAs (eRNAs), small nuclear RNAs (snRNAs), telomerase RNAs and long non-coding RNAs (lncRNAs). The polypeptide is Integrator complex subunit 9 (ints9) (Xenopus laevis (African clawed frog)).